The sequence spans 620 residues: Arginine--tRNA ligase (620 aa).

The short motif at 147–157 is the 'HIGH' region element; that stretch reads ANPTGPIHIGG.

This sequence belongs to the class-I aminoacyl-tRNA synthetase family. As to quaternary structure, monomer.

The protein resides in the cytoplasm. The enzyme catalyses tRNA(Arg) + L-arginine + ATP = L-arginyl-tRNA(Arg) + AMP + diphosphate. The polypeptide is Arginine--tRNA ligase (Bifidobacterium longum (strain NCC 2705)).